The chain runs to 133 residues: Type VI secretion amidase effector 2 protein (133 aa).

Residues Cys-23 and His-73 contribute to the active site.

It belongs to the cell wall amidase Dae2/Tae2-like family.

The protein localises to the host periplasm. It is found in the secreted. It functions in the pathway cell wall degradation; peptidoglycan degradation. Functionally, toxic component of a contact-dependent interbacterial competition system (also called effector-immunity systems). Secreted by the SPI-6 type VI secretion system, probably into the periplasm of bacterial target cells. A cell wall amidase with specificity toward the D-meso-DAP-D-alanine bond (D-meso-diaminopimelic-D-alanine) found in peptidoglycan of Gram-negative bacteria. Toxicity is counteracted by a cognate immunity protein Tai2 (t2585), but not immunity proteins associated with a similar endopeptidase in other bacteria. In vitro degrades peptidoglycans from Gram-negative but not Gram-positive bacteria. In Salmonella typhi, this protein is Type VI secretion amidase effector 2 protein.